The primary structure comprises 242 residues: MPPEAPRRGDPSRVLLDHAYLLHRRDYRETSLLLELFTLRHGRIGVIAKGARRGRQGFAAVLQPFVPLLVSWSGRGELANLNHAEAAGIGVRLQHTALFCGFYLNELLMRLLPPHDPCPELFGTYRGGLETLAAGEDLETALRSFELSLLEAIGYGLQLRVEAESGEAIRPERLYSYRIDAGPVPAGDEADAVHGMTLLALRDRRFDTSQTRTEAKRLMRRIIAHHLNGRALKSRELFRSSS.

The protein belongs to the RecO family.

Its function is as follows. Involved in DNA repair and RecF pathway recombination. The sequence is that of DNA repair protein RecO from Methylococcus capsulatus (strain ATCC 33009 / NCIMB 11132 / Bath).